The sequence spans 137 residues: Endoribonuclease YbeY (137 aa).

Positions 105, 109, and 115 each coordinate Zn(2+).

This sequence belongs to the endoribonuclease YbeY family. The cofactor is Zn(2+).

The protein resides in the cytoplasm. Its function is as follows. Single strand-specific metallo-endoribonuclease involved in late-stage 70S ribosome quality control and in maturation of the 3' terminus of the 16S rRNA. The chain is Endoribonuclease YbeY from Chlorobaculum tepidum (strain ATCC 49652 / DSM 12025 / NBRC 103806 / TLS) (Chlorobium tepidum).